The following is a 197-amino-acid chain: MKLIVGMTGATCAPLGVALLQALREMPNVETHLVMSKWAKTTIELETPYSARDVAALADFSHNPADQAAIISSGSFRTDGMIVIPCSMKTLAGIRAGYADGLVGRAADVVLKEGRKLVLVPREMPLSTIHLENMLALSRMGVAMVPPMPAFYNHPETVDDIVHHVVARVLDQFGLEHPHARRWQGLPQARNFSQENE.

Residues 9-11, S36, 87-90, and R122 each bind FMN; these read GAT and SMKT.

The protein belongs to the UbiX/PAD1 family. YclB subfamily. As to quaternary structure, homododecamer.

The enzyme catalyses dimethylallyl phosphate + FMNH2 = prenylated FMNH2 + phosphate. Functionally, flavin prenyltransferase that catalyzes the synthesis of the prenylated FMN cofactor (prenyl-FMN) for phenolic acid decarboxylase C. Involved in the decarboxylation and detoxification of phenolic derivatives under both aerobic and anaerobic conditions. This is Probable UbiX-like flavin prenyltransferase (ecdB) from Escherichia coli O111:H-.